The chain runs to 559 residues: ATP-dependent RNA helicase HAS1 (559 aa).

Residues 1–90 (MAPRSQSKSQ…TSEAEADEPG (90 aa)) form a disordered region. Basic and acidic residues-rich tracts occupy residues 9–22 (SQRE…REDA) and 55–75 (PDQK…ELTK). The Q motif signature appears at 93-121 (YSFEKADFSEPTMKAIKEMGFQKMTKVQA). Residues 124–300 (IPPLLAGRDV…RISLRPGPLY (177 aa)) form the Helicase ATP-binding domain. 137-144 (AKTGSGKT) serves as a coordination point for ATP. Residues 247–250 (DEAD) carry the DEAD box motif. A Helicase C-terminal domain is found at 314 to 484 (GLEQGYVVCD…NVQSQLTKLI (171 aa)).

The protein belongs to the DEAD box helicase family. DDX18/HAS1 subfamily. In terms of assembly, associates in the nucleolus with the 60S and pre-60S ribosomal subunits.

It is found in the nucleus. It localises to the nucleolus. It catalyses the reaction ATP + H2O = ADP + phosphate + H(+). Functionally, ATP-dependent RNA helicase involved in 40S ribosomal subunit biogenesis. Required for the processing and cleavage of 35S pre-rRNA at sites A0, A1, and A2, leading to mature 18S rRNA. This Lodderomyces elongisporus (strain ATCC 11503 / CBS 2605 / JCM 1781 / NBRC 1676 / NRRL YB-4239) (Yeast) protein is ATP-dependent RNA helicase HAS1 (HAS1).